We begin with the raw amino-acid sequence, 1048 residues long: Pleckstrin homology domain-containing family A member 6 (1048 aa).

The segment covering 1–22 (MSNKTGGKRPATTNSDIPNHNM) has biased composition (polar residues). The disordered stretch occupies residues 1 to 36 (MSNKTGGKRPATTNSDIPNHNMVSEVPPERPSVRAT). One can recognise a PH domain in the interval 59–158 (PVTKAGWLFK…WIQAMGEAAR (100 aa)). Disordered regions lie at residues 165 to 318 (QKSV…MNQL) and 448 to 467 (SLQPRSHSVPRSPSQGSYSR). Basic and acidic residues predominate over residues 201-233 (PEPEAKTRGEGDGRGCEKAERRPERPEVKKEPP). Phosphoserine is present on residues S247 and S251. Over residues 267–290 (AQPNGWQYHSPSRPGSTAFPSQDG) the composition is skewed to polar residues. A phosphoserine mark is found at S314, S459, S461, and S472. A compositionally biased stretch (polar residues) spans 456-465 (VPRSPSQGSY). Position 492 is a phosphotyrosine (Y492). S591 carries the phosphoserine modification. The disordered stretch occupies residues 663–746 (RKNNPSRGTD…HQTLPLDTPR (84 aa)). Residues 687–711 (SSNSPASPLSSASLTSPLSPFSLVS) are compositionally biased toward low complexity. The segment covering 712 to 721 (GSQGSPTKPG) has biased composition (polar residues). T744 is modified (phosphothreonine). S777 carries the phosphoserine modification. T784 carries the post-translational modification Phosphothreonine. The tract at residues 793–858 (ASGLTNGLSS…PAPDPSPRPA (66 aa)) is disordered. Polar residues predominate over residues 794–803 (SGLTNGLSSQ). S801 carries the phosphoserine modification. The span at 815–827 (GKVKMSVEEQIDR) shows a compositional bias: basic and acidic residues. Basic residues predominate over residues 828–842 (MRRHQSGSMREKRRS). A phosphoserine mark is found at S848, S854, and S867. At T920 the chain carries Phosphothreonine. S940 carries the phosphoserine modification. Disordered regions lie at residues 968 to 989 (PIGEGDSVDVPQDSESQLQEQE) and 1005 to 1048 (RGRM…TMRV). T1015 carries the post-translational modification Phosphothreonine. Pro residues predominate over residues 1016–1030 (PSPPTSPASPAPPAN). Phosphoserine is present on S1017. A Phosphothreonine modification is found at T1020. Residues S1021 and S1024 each carry the phosphoserine modification.

In terms of tissue distribution, highly expressed in heart, kidney and throughout the brain.

The sequence is that of Pleckstrin homology domain-containing family A member 6 (PLEKHA6) from Homo sapiens (Human).